Here is a 116-residue protein sequence, read N- to C-terminus: Toxin CSTX-10 (116 aa).

The first 20 residues, 1–20, serve as a signal peptide directing secretion; that stretch reads MKVLVIFAVLSLVIFSNCSA. Positions 21–47 are excised as a propeptide; that stretch reads ETDEDFFGEESFEADDIIPFIAKEQVR. 4 cysteine pairs are disulfide-bonded: Cys-53–Cys-68, Cys-60–Cys-77, Cys-67–Cys-94, and Cys-79–Cys-92.

As to expression, expressed by the venom gland.

The protein localises to the secreted. Its subcellular location is the target cell membrane. Spider venom toxin that shows calcium channel blocking activity and exhibits cytolytic activity by affecting the outer leaflet curvature and/or pore formation across the membrane. It blocks L-type calcium channels (Cav1/CACNA1) in mammalian neurons at nanomolar concentrations. Furthermore, it produces a slow voltage-independent block of mid/low and high voltage-activated calcium channels in cockroach neurons. Potassium ions, histamine, M-ctenitoxin-Cs1a (AC P83619), CSTX-9 (AC P58604), and CSTX-13 (AC P83919) synergistically increase the insecticidal activity of this toxin. In vivo, it causes paralysis in blow flies and provokes death in drosophila. The chain is Toxin CSTX-10 from Cupiennius salei (American wandering spider).